Here is a 417-residue protein sequence, read N- to C-terminus: Nuclear envelope integral membrane protein 2 (417 aa).

Residues 1-24 (MGPRQGRWWLLLWLPPLATLPVRG) form the signal peptide. A run of 5 helical transmembrane segments spans residues 148–168 (NIMDFKLFLVFVAGVFLFFYA), 177–197 (FYYSSGTVLGVLMTLVFVLLL), 207–227 (TFWALMVGCWFASVYIVCQLM), 239–259 (IYVLGYVLIVGFFSFVVCYKH), and 280–300 (LVLVYAGVAVPQFAYAAIILL).

This sequence belongs to the NEMP family.

The protein localises to the nucleus inner membrane. The protein is Nuclear envelope integral membrane protein 2 (NEMP2) of Homo sapiens (Human).